The chain runs to 752 residues: Iron-sulfur clusters transporter ABCB7, mitochondrial (752 aa).

The transit peptide at 1–22 directs the protein to the mitochondrion; sequence MALLAMHSWRWAAAAAAFEKRR. Over 23–140 the chain is Mitochondrial matrix; sequence HSAILIRPLV…KDRPDLRARV (118 aa). Residues 140–436 enclose the ABC transmembrane type-1 domain; the sequence is VAISLGFLGG…LGTVYRETRQ (297 aa). A helical transmembrane segment spans residues 141-161; it reads AISLGFLGGAKAMNIVVPFMF. Residues 162 to 185 lie on the Mitochondrial intermembrane side of the membrane; that stretch reads KYAVDSLNQMSGNMLNLSDAPNTV. A helical transmembrane segment spans residues 186 to 206; it reads ATMATAVLIGYGVSRAGAAFF. Over 207–259 the chain is Mitochondrial matrix; sequence NEVRNAVFGKVAQNSIRRIAKNVFLHLHNLDLGFHLSRQTGALSKAIDRGTRG. 2 positions are modified to N6-acetyllysine: K216 and K251. The chain crosses the membrane as a helical span at residues 260–280; sequence ISFVLSALVFNLLPIMFEVML. Residues 281–290 lie on the Mitochondrial intermembrane side of the membrane; that stretch reads VSGVLYYKCG. Residues 291–311 form a helical membrane-spanning segment; sequence AQFALVTLGTLGTYTAFTVAV. Residues 312 to 382 lie on the Mitochondrial matrix side of the membrane; it reads TRWRTRFRIE…TLAMLNFGQS (71 aa). Position 315–319 (315–319) interacts with glutathione; sequence RTRFR. A Phosphoserine modification is found at S336. Residue Y340 is modified to Phosphotyrosine. T342 is modified (phosphothreonine). 378-381 contributes to the glutathione binding site; sequence NFGQ. The helical transmembrane segment at 383–403 threads the bilayer; sequence AIFSVGLTAIMVLASQGIVAG. Over 404-409 the chain is Mitochondrial intermembrane; it reads TLTVGD. Residues 410–430 form a helical membrane-spanning segment; that stretch reads LVMVNGLLFQLSLPLNFLGTV. G428 serves as a coordination point for glutathione. Over 431 to 752 the chain is Mitochondrial matrix; sequence YRETRQALID…SVKGCGNCSC (322 aa). In terms of domain architecture, ABC transporter spans 472–706; sequence VAFDNVHFEY…PHSIYSEMWH (235 aa). Residues Y481 and 505-516 each bind ATP; that span reads GGSGSGKSTIVR.

Belongs to the ABC transporter superfamily. ABCB family. Heavy Metal importer (TC 3.A.1.210) subfamily. In terms of assembly, homodimer or heterodimer. Interacts with C10orf88/PAAT. Forms a complex with ABCB10 and FECH, where a dimeric FECH bridges ABCB7 and ABCB10 homodimers; this complex may be required for cellular iron homeostasis, mitochondrial function and heme biosynthesis. Interacts with FECH. Interacts with ATP5F1A. Interacts with COX4I1; this interaction allows the regulation of cellular iron homeostasis and cellular reactive oxygen species (ROS) levels in cardiomyocytes.

The protein localises to the mitochondrion inner membrane. It carries out the reaction (glutathione)4[2Fe(III)-2S] cluster(in) + ATP + H2O = (glutathione)4[2Fe(III)-2S] cluster(out) + ADP + phosphate + H(+). ATPase activity is stimulated by glutathione. Exports glutathione-coordinated iron-sulfur clusters such as [2Fe-2S]-(GS)4 cluster from the mitochondria to the cytosol in an ATP-dependent manner allowing the assembly of the cytosolic iron-sulfur (Fe/S) cluster-containing proteins and participates in iron homeostasis. Moreover, through a functional complex formed of ABCB7, FECH and ABCB10, also plays a role in the cellular iron homeostasis, mitochondrial function and heme biosynthesis. In cardiomyocytes, regulates cellular iron homeostasis and cellular reactive oxygen species (ROS) levels through its interaction with COX4I1. May also play a role in hematopoiesis. This Homo sapiens (Human) protein is Iron-sulfur clusters transporter ABCB7, mitochondrial.